A 210-amino-acid polypeptide reads, in one-letter code: Thymidylate kinase (210 aa).

Residue 9–16 coordinates ATP; the sequence is GLEGAGKS.

It belongs to the thymidylate kinase family.

The enzyme catalyses dTMP + ATP = dTDP + ADP. Phosphorylation of dTMP to form dTDP in both de novo and salvage pathways of dTTP synthesis. The polypeptide is Thymidylate kinase (Aliivibrio salmonicida (strain LFI1238) (Vibrio salmonicida (strain LFI1238))).